The following is a 1368-amino-acid chain: DNA-directed RNA polymerase subunit beta (1368 aa).

Belongs to the RNA polymerase beta chain family. As to quaternary structure, the RNAP catalytic core consists of 2 alpha, 1 beta, 1 beta' and 1 omega subunit. When a sigma factor is associated with the core the holoenzyme is formed, which can initiate transcription.

It carries out the reaction RNA(n) + a ribonucleoside 5'-triphosphate = RNA(n+1) + diphosphate. Functionally, DNA-dependent RNA polymerase catalyzes the transcription of DNA into RNA using the four ribonucleoside triphosphates as substrates. The protein is DNA-directed RNA polymerase subunit beta of Desulfosudis oleivorans (strain DSM 6200 / JCM 39069 / Hxd3) (Desulfococcus oleovorans).